The sequence spans 254 residues: PF03932 family protein CutC (254 aa).

The protein belongs to the CutC family.

It is found in the cytoplasm. The protein is PF03932 family protein CutC of Yersinia pestis bv. Antiqua (strain Angola).